A 453-amino-acid chain; its full sequence is UPF0210 protein Mbur_0828 (453 aa).

The protein belongs to the UPF0210 family.

This chain is UPF0210 protein Mbur_0828, found in Methanococcoides burtonii (strain DSM 6242 / NBRC 107633 / OCM 468 / ACE-M).